A 339-amino-acid chain; its full sequence is Thymidine kinase (339 aa).

Residue 11-18 coordinates ATP; that stretch reads GAFGIGKT. The active-site Proton acceptor is Glu39. Positions 59 and 83 each coordinate substrate. Arg176 is a binding site for ATP. Arg182 is a binding site for substrate.

This sequence belongs to the herpesviridae thymidine kinase family. As to quaternary structure, homodimer.

The catalysed reaction is thymidine + ATP = dTMP + ADP + H(+). In terms of biological role, catalyzes the transfer of the gamma-phospho group of ATP to thymidine to generate dTMP in the salvage pathway of pyrimidine synthesis. The dTMP serves as a substrate for DNA polymerase during viral DNA replication. Allows the virus to be reactivated and to grow in non-proliferative cells lacking a high concentration of phosphorylated nucleic acid precursors. This Amazona oratrix (yellow-headed parrot) protein is Thymidine kinase.